The chain runs to 195 residues: Protein GrpE (195 aa).

The protein belongs to the GrpE family. In terms of assembly, homodimer.

It is found in the cytoplasm. Participates actively in the response to hyperosmotic and heat shock by preventing the aggregation of stress-denatured proteins, in association with DnaK and GrpE. It is the nucleotide exchange factor for DnaK and may function as a thermosensor. Unfolded proteins bind initially to DnaJ; upon interaction with the DnaJ-bound protein, DnaK hydrolyzes its bound ATP, resulting in the formation of a stable complex. GrpE releases ADP from DnaK; ATP binding to DnaK triggers the release of the substrate protein, thus completing the reaction cycle. Several rounds of ATP-dependent interactions between DnaJ, DnaK and GrpE are required for fully efficient folding. In Blochmanniella pennsylvanica (strain BPEN), this protein is Protein GrpE.